The chain runs to 250 residues: Probable transcriptional regulatory protein SACE_2018 (250 aa).

This sequence belongs to the TACO1 family.

Its subcellular location is the cytoplasm. The protein is Probable transcriptional regulatory protein SACE_2018 of Saccharopolyspora erythraea (strain ATCC 11635 / DSM 40517 / JCM 4748 / NBRC 13426 / NCIMB 8594 / NRRL 2338).